A 620-amino-acid polypeptide reads, in one-letter code: Glutathione-regulated potassium-efflux system protein KefC (620 aa).

12 helical membrane passes run 4–24, 26–46, 54–74, 90–110, 114–134, 149–169, 178–198, 218–238, 270–290, 294–314, 327–347, and 359–379; these read HTLLQALIYLGSAALIVPIAV, LGLGSVLGYLIAGCIIGPWGL, SILHFAEIGVVLMLFVIGLEL, GALQMVVCGGLIGLFCMFLGL, VAELIGMTLALSSTAIAMQAM, FAVLLFQDIAAIPLVAMIPLL, LGAFALSALKVAGALALVVLL, VFSAVALFLVFGFGLLLEEVG, GLLLGLFFIGVGMSIDFGTLV, LRILLLLAGFLAIKIVMLWLV, WFAVLLGQGSEFAFVVFGAAQ, and ALTLAVALSMAATPIFLVLLT. The 120-residue stretch at 399–518 folds into the RCK N-terminal domain; sequence QPRVIVAGFG…AGVAMPERET (120 aa). Residues 599 to 620 are disordered; the sequence is QGTAEGKHSGEVADEPEVKPSI.

The protein belongs to the monovalent cation:proton antiporter 2 (CPA2) transporter (TC 2.A.37) family. KefC subfamily. As to quaternary structure, homodimer. Interacts with the regulatory subunit KefF.

It localises to the cell inner membrane. In terms of biological role, pore-forming subunit of a potassium efflux system that confers protection against electrophiles. Catalyzes K(+)/H(+) antiport. This is Glutathione-regulated potassium-efflux system protein KefC from Salmonella agona (strain SL483).